We begin with the raw amino-acid sequence, 417 residues long: MAAVCSGNAVPVWLSEDDLSCIICQGLLDQPTTLPCGHSFCLRCLHDLWVSKRGAVDGCPWACPICRKGPLTKPKLHKNPLLQDLVDKYLQAAREVEAGSEPEPAPAPRSAPQVTVQKSTTNVIQELTDMVRQLVDDVKSLQTQRPNLGSGQDNAQGTPPTDSSSEGEHSLDSPKLVTFSISQKKIQEILHNLEEIQEKLQGSVPGRAPPRERVQEMTSSLCLLPDQRRPAPRKASHLSLWAISPTFDLRTLSYNLEVSNNSRRVTVSRGDLHTYHWSPQRFSISQVFCSQALSSGQKYWEVDTRNCSHWAIGVASWGMKRDGMLGRTMDSWCIEWRGPGQFSAWAKMKKTDLQSDLPEVVGVWLDLESGELAFYAVADHERLLYECEVSSSSPLHPAFWLYGLSPGNYLEIKQLNT.

An RING-type zinc finger spans residues 21–67 (CIICQGLLDQPTTLPCGHSFCLRCLHDLWVSKRGAVDGCPWACPICR). Disordered stretches follow at residues 95-118 (EVEAGSEPEPAPAPRSAPQVTVQK) and 143-173 (TQRPNLGSGQDNAQGTPPTDSSSEGEHSLDS). Coiled-coil stretches lie at residues 121–145 (TNVIQELTDMVRQLVDDVKSLQTQR) and 180–204 (SISQKKIQEILHNLEEIQEKLQGSV). Positions 143–164 (TQRPNLGSGQDNAQGTPPTDSS) are enriched in polar residues. Residues 225 to 417 (PDQRRPAPRK…NYLEIKQLNT (193 aa)) enclose the B30.2/SPRY domain.

Homodimer. Interacts (homodimer) with RIGI (double-stranded RNA-bound oligomeric form); involved in both RIGI ubiquitination, oligomerization into filaments associated with viral RNAs and the bridging of these filaments. Interacts with UBE2D3 and UBE2N; E2 ubiquitin ligases involved in RNF135-mediated ubiquitination of RIGI and activation of the RIG-I signaling pathway. Interacts with PCBP2. As to expression, ubiquitously expressed.

Its subcellular location is the cytoplasm. It localises to the stress granule. It carries out the reaction S-ubiquitinyl-[E2 ubiquitin-conjugating enzyme]-L-cysteine + [acceptor protein]-L-lysine = [E2 ubiquitin-conjugating enzyme]-L-cysteine + N(6)-ubiquitinyl-[acceptor protein]-L-lysine.. Its pathway is protein modification; protein ubiquitination. Its function is as follows. E2-dependent E3 ubiquitin-protein ligase that functions as a RIGI coreceptor in the sensing of viral RNAs in cell cytoplasm and the activation of the antiviral innate immune response. Together with the UBE2D3, UBE2N and UB2V1 E2 ligases, catalyzes the 'Lys-63'-linked polyubiquitination of RIGI oligomerized on viral RNAs, an essential step in the activation of the RIG-I signaling pathway. Through a ubiquitin-independent parallel mechanism, which consists in bridging RIGI filaments forming on longer viral RNAs, further activates the RIG-I signaling pathway. This second mechanism that synergizes with the ubiquitin-dependent one would thereby allow an RNA length-dependent regulation of the RIG-I signaling pathway. Associated with the E2 ligase UBE2N, also constitutively synthesizes unanchored 'Lys-63'-linked polyubiquitin chains that may also activate the RIG-I signaling pathway. It is not involved in the innate immune response against DNA viruses. The chain is E3 ubiquitin-protein ligase RNF135 from Mus musculus (Mouse).